A 176-amino-acid polypeptide reads, in one-letter code: Odorant-binding protein 2a (176 aa).

An N-terminal signal peptide occupies residues 1–19; sequence MKSLLLTILLLGLVAVLKA. N-linked (GlcNAc...) asparagine glycans are attached at residues Asn42 and Asn124. An intrachain disulfide couples Cys79 to Cys172.

This sequence belongs to the calycin superfamily. Lipocalin family. In terms of tissue distribution, expressed in the liver (at protein level). Expressed in epididymis.

The protein resides in the secreted. Its function is as follows. Involved in the regulation of systematic glucose homeostasis and insulin sensitivity. Involved in the regulation of liver lipid levels by positive regulation of hepatic lipogenesis and negative regulation of fatty acid beta-oxidation; via downstream transcriptional regulation of CPT1A and hepatic lipogenic program gene expression. May regulate hepatic lipogenesis and fatty acid beta-oxidation in an autocrine or paracrine manner. The chain is Odorant-binding protein 2a (Obp2a) from Mus musculus (Mouse).